The following is a 570-amino-acid chain: Sulfite reductase [NADPH] hemoprotein beta-component (570 aa).

[4Fe-4S] cluster contacts are provided by Cys434, Cys440, Cys479, and Cys483. Position 483 (Cys483) interacts with siroheme.

The protein belongs to the nitrite and sulfite reductase 4Fe-4S domain family. As to quaternary structure, alpha(8)-beta(8). The alpha component is a flavoprotein, the beta component is a hemoprotein. Requires siroheme as cofactor. It depends on [4Fe-4S] cluster as a cofactor.

It carries out the reaction hydrogen sulfide + 3 NADP(+) + 3 H2O = sulfite + 3 NADPH + 4 H(+). It functions in the pathway sulfur metabolism; hydrogen sulfide biosynthesis; hydrogen sulfide from sulfite (NADPH route): step 1/1. Functionally, component of the sulfite reductase complex that catalyzes the 6-electron reduction of sulfite to sulfide. This is one of several activities required for the biosynthesis of L-cysteine from sulfate. This Salmonella agona (strain SL483) protein is Sulfite reductase [NADPH] hemoprotein beta-component.